Reading from the N-terminus, the 129-residue chain is Ubiquinol-cytochrome-c reductase complex assembly factor 2 (129 aa).

The N-terminal 13 residues, 1 to 13 (MSATRYRRFLKLC), are a transit peptide targeting the mitochondrion.

It is found in the mitochondrion matrix. Its subcellular location is the mitochondrion nucleoid. The protein resides in the mitochondrion. Required for the assembly of the ubiquinol-cytochrome c reductase complex (mitochondrial respiratory chain complex III or cytochrome b-c1 complex). May play a role in the modulation of respiratory chain activities such as oxygen consumption and ATP production. May be involved in cytochrome b translation and/or stability. This is Ubiquinol-cytochrome-c reductase complex assembly factor 2 (uqcc2) from Danio rerio (Zebrafish).